Reading from the N-terminus, the 261-residue chain is Small ribosomal subunit protein eS4B (261 aa).

Serine 32 carries the phosphoserine modification. An S4 RNA-binding domain is found at 42-105 (LPLIVFLRNR…NENFRLVYDV (64 aa)). Lysine 62 is covalently cross-linked (Glycyl lysine isopeptide (Lys-Gly) (interchain with G-Cter in ubiquitin)). A Phosphothreonine modification is found at threonine 115. Residues lysine 134, lysine 161, lysine 168, lysine 174, lysine 179, lysine 211, and lysine 233 each participate in a glycyl lysine isopeptide (Lys-Gly) (interchain with G-Cter in ubiquitin) cross-link. Serine 247 is subject to Phosphoserine.

Belongs to the eukaryotic ribosomal protein eS4 family. As to quaternary structure, component of the small ribosomal subunit (SSU). Mature yeast ribosomes consist of a small (40S) and a large (60S) subunit. The 40S small subunit contains 1 molecule of ribosomal RNA (18S rRNA) and 33 different proteins (encoded by 57 genes). The large 60S subunit contains 3 rRNA molecules (25S, 5.8S and 5S rRNA) and 46 different proteins (encoded by 81 genes).

It is found in the cytoplasm. Its function is as follows. Component of the ribosome, a large ribonucleoprotein complex responsible for the synthesis of proteins in the cell. The small ribosomal subunit (SSU) binds messenger RNAs (mRNAs) and translates the encoded message by selecting cognate aminoacyl-transfer RNA (tRNA) molecules. The large subunit (LSU) contains the ribosomal catalytic site termed the peptidyl transferase center (PTC), which catalyzes the formation of peptide bonds, thereby polymerizing the amino acids delivered by tRNAs into a polypeptide chain. The nascent polypeptides leave the ribosome through a tunnel in the LSU and interact with protein factors that function in enzymatic processing, targeting, and the membrane insertion of nascent chains at the exit of the ribosomal tunnel. In Saccharomyces cerevisiae (strain ATCC 204508 / S288c) (Baker's yeast), this protein is Small ribosomal subunit protein eS4B.